A 932-amino-acid polypeptide reads, in one-letter code: Chitin synthase regulatory factor 3 (932 aa).

The segment covering 1 to 16 (MKDSHSSRRKYEKEKL) has biased composition (basic and acidic residues). 3 disordered regions span residues 1 to 53 (MKDS…PTSR), 264 to 356 (TLEE…LQQP), and 374 to 406 (EVPA…NPTV). 3 stretches are compositionally biased toward polar residues: residues 35–53 (SGNT…PTSR), 274–285 (DSITNTVSNASS), and 308–319 (SHFSSTDSNTDS). A compositionally biased stretch (basic and acidic residues) spans 337-349 (KSSETLKNPRNDD). Ser393 is subject to Phosphoserine. Sel1-like repeat units lie at residues 638–674 (PEAL…KKGH), 675–710 (PLSN…EMDV), 711–747 (VEAM…KSKG), 751–788 (VRAM…VYGY), 789–825 (AAAQ…EQDY), 826–863 (GEAE…CKGL), and 864–899 (AKAQ…KQGF). The segment at 905 to 932 (RLEEQALSSKQTHSKAPKKKQQEQCVVM) is disordered.

The sequence is that of Chitin synthase regulatory factor 3 (chr3) from Schizosaccharomyces pombe (strain 972 / ATCC 24843) (Fission yeast).